The sequence spans 1169 residues: MEIQFLAGRSGSGKTTAILEEIKEQLRLDPLGPPIIFLVPDQMTFLMEYELAKTSEAGGMIRAKVFSFTRLAWSILQQTGGANRQFVTSTGIQMLLRKVIEEQKDKFKVFKKASDKPGFVEQIEKTMAEFKRYCMLPEEIEKISVESMLSEYTEERRAAEKLHDLHVLYQQMEEHLQDEYVHSEDYLNLLAQQIPSAEEIKGAHIYIDGFYQFTPQQLLVIEQLLLHAAKVTAAFTVDQSYHDRQPNELDLFRMTGKTYFQLYQLAKECGADISETIFERNHRHLYTPDLAYLEHQYEQRPVQPYQENTPHLTVSKSASKRAEIEGVARDILDLVREKGLRLRDISVVARHVDDYKDTLKEVFRDYDIPFFIDGNESMQYHPLIELIRSSLDVIKGNWRYEAVFRCVKTEFLFPLEITKNKAREQADQLENYCIAYGVKGERWTNGSRFHYRRFQSLDEDFRQTDQEIEMEQMLNDVKEWITPPLYQLQKRLKNAQKVRDMVEAVYVFLEEIQVPDKLEKARLEAEEAGRLAEAMQHGQVWDAVIQLMDEFVDMLGDEELSFPLFQQMIDTGLASLKFALIPPSLDQVFIGSMDLSRMYQVKCMFIIGVNDGVIPARPSDESVLSEDDREWLKRAGAELAETGKERLLDEQFLIYQALSSPSHHLYLSYAASDAEGRSLLPSPLIKYCQELMPNHQQALYVLDPELLEDDEQLKFVANEHVSLSYTISQLQQWLNQYPISGVWWSVYNYLMTSPNRDVSKNIMSSLFFTNRAKPLKPNVTKELYGDHIQGSVSRMEKFNACAFSHFASHGLKLKDRQFYKLEAPDIGQLFHSALKHISDTLVEQKKDWKNLTKEDCVTYSRHAIEQLAPRLQKEILLSSNRHAYIKEKLQKILIRVSSILSEHAKVSGFSPVGLELGFGGQGPLPPFTFQLKNGCTMELVGRIDRVDKAEGSKGLFLRIVDYKSSEKGLDLAEVYYGLALQMLTYLDLTITYSKEWLGIEATPAGILYFHIHDPFIQAPIPLAEDEIEQEIFKKFKMKGLLLEDVEAVKLMDQTLESGRSQVIQAGLKKDGSFRSDSAVLSEDHFHILTQHVRRTFEEAGERITNGEVAINPYKLKDQTPCRFCSFKSICQFDESIEDNDFRVLTSEKDDVVIERIKKEGDQYANTKTE.

The 285-residue stretch at 1–285 (MEIQFLAGRS…TIFERNHRHL (285 aa)) folds into the UvrD-like helicase ATP-binding domain. Residue 8–15 (GRSGSGKT) participates in ATP binding. The UvrD-like helicase C-terminal domain maps to 280–586 (RNHRHLYTPD…KFALIPPSLD (307 aa)). Residues cysteine 801, cysteine 1121, cysteine 1124, and cysteine 1130 each coordinate [4Fe-4S] cluster.

It belongs to the helicase family. AddB/RexB type 1 subfamily. In terms of assembly, heterodimer of AddA and AddB. The cofactor is Mg(2+). [4Fe-4S] cluster is required as a cofactor.

The heterodimer acts as both an ATP-dependent DNA helicase and an ATP-dependent, dual-direction single-stranded exonuclease. Recognizes the chi site generating a DNA molecule suitable for the initiation of homologous recombination. The AddB subunit has 5' -&gt; 3' nuclease activity but not helicase activity. This Bacillus pumilus (strain SAFR-032) protein is ATP-dependent helicase/deoxyribonuclease subunit B.